The following is a 144-amino-acid chain: Large ribosomal subunit protein uL15 (144 aa).

The disordered stretch occupies residues 1 to 48; sequence MIKLEYLQDPSPRKRRTKLLGRGPSSGHGKTSGRGHKGDGSRSGYKRR.

It belongs to the universal ribosomal protein uL15 family. Part of the 50S ribosomal subunit.

Its function is as follows. Binds to the 23S rRNA. The polypeptide is Large ribosomal subunit protein uL15 (Chlamydia muridarum (strain MoPn / Nigg)).